We begin with the raw amino-acid sequence, 218 residues long: 5-oxoprolinase subunit B (218 aa).

This sequence belongs to the PxpB family. Forms a complex composed of PxpA, PxpB and PxpC.

It carries out the reaction 5-oxo-L-proline + ATP + 2 H2O = L-glutamate + ADP + phosphate + H(+). Functionally, catalyzes the cleavage of 5-oxoproline to form L-glutamate coupled to the hydrolysis of ATP to ADP and inorganic phosphate. The sequence is that of 5-oxoprolinase subunit B from Escherichia coli O157:H7.